The sequence spans 153 residues: Large ribosomal subunit protein uL13 (153 aa).

The tract at residues 134–153 (EAQQPQALDVGSLNRKNVSA) is disordered.

It belongs to the universal ribosomal protein uL13 family. In terms of assembly, part of the 50S ribosomal subunit.

Its function is as follows. This protein is one of the early assembly proteins of the 50S ribosomal subunit, although it is not seen to bind rRNA by itself. It is important during the early stages of 50S assembly. The sequence is that of Large ribosomal subunit protein uL13 from Methylorubrum extorquens (strain CM4 / NCIMB 13688) (Methylobacterium extorquens).